We begin with the raw amino-acid sequence, 361 residues long: Fructose-bisphosphate aldolase (361 aa).

Ser63 provides a ligand contact to D-glyceraldehyde 3-phosphate. The active-site Proton donor is the Asp110. Zn(2+) is bound by residues His111, Asp145, Glu175, and His227. Gly228 is a dihydroxyacetone phosphate binding site. Residue His266 participates in Zn(2+) binding. Dihydroxyacetone phosphate contacts are provided by residues 267-269 (GGS) and 288-291 (NLDT).

It belongs to the class II fructose-bisphosphate aldolase family. In terms of assembly, homodimer. Zn(2+) is required as a cofactor.

It carries out the reaction beta-D-fructose 1,6-bisphosphate = D-glyceraldehyde 3-phosphate + dihydroxyacetone phosphate. It functions in the pathway carbohydrate degradation; glycolysis; D-glyceraldehyde 3-phosphate and glycerone phosphate from D-glucose: step 4/4. Catalyzes the aldol condensation of dihydroxyacetone phosphate (DHAP or glycerone-phosphate) with glyceraldehyde 3-phosphate (G3P) to form fructose 1,6-bisphosphate (FBP) in gluconeogenesis and the reverse reaction in glycolysis. This Kluyveromyces lactis (strain ATCC 8585 / CBS 2359 / DSM 70799 / NBRC 1267 / NRRL Y-1140 / WM37) (Yeast) protein is Fructose-bisphosphate aldolase (FBA1).